Reading from the N-terminus, the 188-residue chain is Large ribosomal subunit protein eL18B (188 aa).

The tract at residues 153–188 is disordered; it reads GKAPGTPHSRTKPYVLSKGRKFERARGRRASRGYKN. Positions 178-188 are enriched in basic residues; it reads RGRRASRGYKN.

This sequence belongs to the eukaryotic ribosomal protein eL18 family. In terms of assembly, component of the large ribosomal subunit.

It is found in the cytoplasm. It localises to the cytosol. The protein localises to the rough endoplasmic reticulum. In terms of biological role, component of the large ribosomal subunit. The ribosome is a large ribonucleoprotein complex responsible for the synthesis of proteins in the cell. The chain is Large ribosomal subunit protein eL18B (rpl18-b) from Xenopus laevis (African clawed frog).